A 268-amino-acid chain; its full sequence is Small ribosomal subunit protein uS3 (268 aa).

The KH type-2 domain occupies 38 to 106; it reads IRKLLATGME…QVQLNILEVK (69 aa). The interval 217-268 is disordered; that stretch reads NTAAPAGDRPRRERPSRPRRSGATGTTATSTEAGRAATATADAPATEQNQEG. Positions 237-268 are enriched in low complexity; it reads SGATGTTATSTEAGRAATATADAPATEQNQEG.

The protein belongs to the universal ribosomal protein uS3 family. As to quaternary structure, part of the 30S ribosomal subunit. Forms a tight complex with proteins S10 and S14.

In terms of biological role, binds the lower part of the 30S subunit head. Binds mRNA in the 70S ribosome, positioning it for translation. This is Small ribosomal subunit protein uS3 from Rhodococcus erythropolis (strain PR4 / NBRC 100887).